Consider the following 522-residue polypeptide: Sorting nexin-1 (522 aa).

The interval 1 to 142 is disordered; sequence MASGGGGCSA…ELEEEEQEDQ (142 aa). Phosphoserine occurs at positions 32 and 39. Positions 35–45 are enriched in acidic residues; that stretch reads EAGDSDTEGED. Threonine 41 and threonine 48 each carry phosphothreonine. A compositionally biased stretch (polar residues) spans 55-65; the sequence is KPQSPKKTTSL. Serine 58 and serine 72 each carry phosphoserine. Residues 71–80 are compositionally biased toward basic and acidic residues; it reads GSKENGIHEE. Over residues 98–107 the composition is skewed to polar residues; that stretch reads LDSTQNNQKT. Residues 132–142 are compositionally biased toward acidic residues; sequence EELEEEEQEDQ. A PX domain is found at 143–272; it reads FDLTVGITDP…EFLEKEELPR (130 aa). 3 residues coordinate a 1,2-diacyl-sn-glycero-3-phospho-(1D-myo-inositol-3-phosphate): arginine 186, serine 188, and lysine 214. Position 188 is a phosphoserine (serine 188). Position 237 is an N6-acetyllysine (lysine 237). A 1,2-diacyl-sn-glycero-3-phospho-(1D-myo-inositol-3-phosphate) is bound at residue arginine 238. Phosphoserine is present on serine 280. The interval 281–298 is membrane-binding amphipathic helix; sequence GAGLLKMFNKATDAVSKM. The BAR domain maps to 302–522; that stretch reads MNESDIWFEE…AFLPEARAIS (221 aa).

It belongs to the sorting nexin family. Predominantly forms heterodimers with BAR domain-containing sorting nexins SNX5, SNX6 and SNX32; can self-associate to form homodimers. The heterodimers are proposed to self-assemble into helical arrays on the membrane to stabilize and expand local membrane curvature underlying endosomal tubule formation. Thought to be a component of the originally described retromer complex (also called SNX-BAR retromer) which is a pentamer containing the heterotrimeric retromer cargo-selective complex (CSC), also described as vacuolar protein sorting subcomplex (VPS) and a heterodimeric membrane-deforming subcomplex formed between SNX1 or SNX2 and SNX5 or SNX6 (also called SNX-BAR subcomplex); the respective CSC and SNX-BAR subcomplexes associate with low affinity. Interacts with SNX5, SNX6, SNX32, VPS26A, VPS29, VPS35, DRD5, DENND5A, KALRN, RHOG (GDP-bound form). The interaction with SNX2 is reported controversially. Interacts with DNAJC13; prevented by presence of HGS. Interacts with HGS.

It is found in the endosome membrane. The protein resides in the golgi apparatus. The protein localises to the trans-Golgi network membrane. It localises to the early endosome membrane. Its subcellular location is the cell projection. It is found in the lamellipodium. Functionally, involved in several stages of intracellular trafficking. Interacts with membranes containing phosphatidylinositol 3-phosphate (PtdIns(3P)) or phosphatidylinositol 3,5-bisphosphate (PtdIns(3,5)P2). Acts in part as component of the retromer membrane-deforming SNX-BAR subcomplex. The SNX-BAR retromer mediates retrograde transport of cargo proteins from endosomes to the trans-Golgi network (TGN) and is involved in endosome-to-plasma membrane transport for cargo protein recycling. The SNX-BAR subcomplex functions to deform the donor membrane into a tubular profile called endosome-to-TGN transport carrier (ETC). Can sense membrane curvature and has in vitro vesicle-to-membrane remodeling activity. Involved in retrograde endosome-to-TGN transport of lysosomal enzyme receptors (IGF2R, M6PR and SORT1). Plays a role in targeting ligand-activated EGFR to the lysosomes for degradation after endocytosis from the cell surface and release from the Golgi. Involvement in retromer-independent endocytic trafficking of P2RY1 and lysosomal degradation of protease-activated receptor-1/F2R. Promotes KALRN- and RHOG-dependent but retromer-independent membrane remodeling such as lamellipodium formation; the function is dependent on GEF activity of KALRN. Required for endocytosis of DRD5 upon agonist stimulation but not for basal receptor trafficking. In Rattus norvegicus (Rat), this protein is Sorting nexin-1 (Snx1).